The following is a 177-amino-acid chain: Large ribosomal subunit protein uL6 (177 aa).

It belongs to the universal ribosomal protein uL6 family. As to quaternary structure, part of the 50S ribosomal subunit.

In terms of biological role, this protein binds to the 23S rRNA, and is important in its secondary structure. It is located near the subunit interface in the base of the L7/L12 stalk, and near the tRNA binding site of the peptidyltransferase center. The chain is Large ribosomal subunit protein uL6 from Rickettsia canadensis (strain McKiel).